Reading from the N-terminus, the 421-residue chain is MWYHKLLHQQSRLRNLMKRGNIAQGLHLSNFKSLFSSSIHWCHTTSKSVNCTWHQHEDHLELQYAGTVMRFDYVWLRDHCRSASCYNSKTHQRSLDTASVDLCIKPKTVHLDETMLFFTWPDGHVTRYDLDWLVKNSYEGQKQKVIQPRILWNSKLYQQAQVPSVDFQCFLETNEGLKKFLQNFLLYGIAFVENVPPTEEHTEKLAERISLIRETIYGRMWYFTSDFSRGDTAYTKLALDRHTDTTYFQEPCGIQVFHCLKHEGTGGRTLLVDGFYAAQQVLQKAPEEFELLSKVPLKHEYIENVGQCHNHMIGVGPILNIYPWNKELYLIRYNNYDRAVINTVPYDVVHRWYTAHRTLTTELRRPENELWVKLKPGKVLFIDNWRVLHGRESFTGYRQLCGCYLTRDDVLNTARLLGLHA.

A mitochondrion-targeting transit peptide spans 1–15 (MWYHKLLHQQSRLRN). N6-acetyllysine occurs at positions 179 and 236. His242, Asp244, and His389 together coordinate Fe cation.

The protein belongs to the gamma-BBH/TMLD family. As to quaternary structure, homodimer. Requires Fe(2+) as cofactor. The cofactor is L-ascorbate.

The protein localises to the mitochondrion matrix. The enzyme catalyses N(6),N(6),N(6)-trimethyl-L-lysine + 2-oxoglutarate + O2 = (3S)-3-hydroxy-N(6),N(6),N(6)-trimethyl-L-lysine + succinate + CO2. It functions in the pathway amine and polyamine biosynthesis; carnitine biosynthesis. Its function is as follows. Converts trimethyllysine (TML) into hydroxytrimethyllysine (HTML). The protein is Trimethyllysine dioxygenase, mitochondrial (Tmlhe) of Mus musculus (Mouse).